The chain runs to 207 residues: MSYSGERDQFAPNMALVPMVVEQTSRGERSYDIFSRLLKERIIFLTGQVEDHMANLITAQMLFLEAENPEKDIFLYINSPGGVITAGMSIYDTMQFIKPDVSTICMGQACSMGAFLLTAGAKGKRFCLPNSRVMIHQPLGGFQGQATDIEIHAKEILKVKSRMNELMAKHTGKSLEEIERDTERDRFLSADEAVEYGLVDSVFTRRD.

The active-site Nucleophile is Ser-111. The active site involves His-136.

It belongs to the peptidase S14 family. As to quaternary structure, fourteen ClpP subunits assemble into 2 heptameric rings which stack back to back to give a disk-like structure with a central cavity, resembling the structure of eukaryotic proteasomes.

It is found in the cytoplasm. The enzyme catalyses Hydrolysis of proteins to small peptides in the presence of ATP and magnesium. alpha-casein is the usual test substrate. In the absence of ATP, only oligopeptides shorter than five residues are hydrolyzed (such as succinyl-Leu-Tyr-|-NHMec, and Leu-Tyr-Leu-|-Tyr-Trp, in which cleavage of the -Tyr-|-Leu- and -Tyr-|-Trp bonds also occurs).. In terms of biological role, cleaves peptides in various proteins in a process that requires ATP hydrolysis. Has a chymotrypsin-like activity. Plays a major role in the degradation of misfolded proteins. This Yersinia enterocolitica serotype O:8 / biotype 1B (strain NCTC 13174 / 8081) protein is ATP-dependent Clp protease proteolytic subunit.